The following is a 254-amino-acid chain: Cytochrome c oxidase subunit 2 (254 aa).

At 1–37 (MNNILNFYPAVITTDVAENWQIGFQDPATPIMEGIIN) the chain is on the mitochondrial intermembrane side. A helical transmembrane segment spans residues 38-58 (LHYDLMFFICVISVFVSWMLG). Topologically, residues 59–83 (RTLWHFEQNQNKIPSSLTHGTLIEM) are mitochondrial matrix. Residues 84–104 (IWTVTPAFILLIIAVPSFSLL) traverse the membrane as a helical segment. The Mitochondrial intermembrane portion of the chain corresponds to 105–254 (YAMDEIISPA…VSWISNKLNE (150 aa)). Cu cation contacts are provided by His186, Cys221, Glu223, Cys225, His229, and Met232. Position 223 (Glu223) interacts with Mg(2+).

It belongs to the cytochrome c oxidase subunit 2 family. In terms of assembly, component of the cytochrome c oxidase (complex IV, CIV), a multisubunit enzyme composed of a catalytic core of 3 subunits and several supernumerary subunits. The complex exists as a monomer or a dimer and forms supercomplexes (SCs) in the inner mitochondrial membrane with ubiquinol-cytochrome c oxidoreductase (cytochrome b-c1 complex, complex III, CIII). Cu cation serves as cofactor.

The protein localises to the mitochondrion inner membrane. It carries out the reaction 4 Fe(II)-[cytochrome c] + O2 + 8 H(+)(in) = 4 Fe(III)-[cytochrome c] + 2 H2O + 4 H(+)(out). Its function is as follows. Component of the cytochrome c oxidase, the last enzyme in the mitochondrial electron transport chain which drives oxidative phosphorylation. The respiratory chain contains 3 multisubunit complexes succinate dehydrogenase (complex II, CII), ubiquinol-cytochrome c oxidoreductase (cytochrome b-c1 complex, complex III, CIII) and cytochrome c oxidase (complex IV, CIV), that cooperate to transfer electrons derived from NADH and succinate to molecular oxygen, creating an electrochemical gradient over the inner membrane that drives transmembrane transport and the ATP synthase. Cytochrome c oxidase is the component of the respiratory chain that catalyzes the reduction of oxygen to water. Electrons originating from reduced cytochrome c in the intermembrane space (IMS) are transferred via the dinuclear copper A center (CU(A)) of subunit 2 and heme A of subunit 1 to the active site in subunit 1, a binuclear center (BNC) formed by heme A3 and copper B (CU(B)). The BNC reduces molecular oxygen to 2 water molecules using 4 electrons from cytochrome c in the IMS and 4 protons from the mitochondrial matrix. The polypeptide is Cytochrome c oxidase subunit 2 (COX2) (Chondrus crispus (Carrageen Irish moss)).